A 333-amino-acid chain; its full sequence is Sphingomyelinase C (333 aa).

The N-terminal stretch at 1–27 is a signal peptide; the sequence is MKGKLLKGVLSLGVGLGALYSGTSAQA. Cysteine 150 and cysteine 186 are disulfide-bonded.

The protein belongs to the neutral sphingomyelinase family. Mg(2+) is required as a cofactor.

It localises to the secreted. The enzyme catalyses a sphingomyelin + H2O = phosphocholine + an N-acylsphing-4-enine + H(+). With respect to regulation, activated by cobalt and manganese ions. In terms of biological role, required, with sphingomyelinase, to effect target cell lysis (hemolysis). The sequence is that of Sphingomyelinase C (sph) from Bacillus cereus.